A 229-amino-acid chain; its full sequence is Potassium/proton antiporter CemA (229 aa).

A run of 3 helical transmembrane segments spans residues 7 to 27 (LTPLPYLASIVFLPWWISLSF), 106 to 126 (IILHFSTNIITLTILSGFFIM), and 189 to 209 (IISGLVSTFPVILDTILKYWI).

Belongs to the CemA family.

It localises to the plastid. It is found in the chloroplast inner membrane. The catalysed reaction is K(+)(in) + H(+)(out) = K(+)(out) + H(+)(in). In terms of biological role, contributes to K(+)/H(+) antiport activity by supporting proton efflux to control proton extrusion and homeostasis in chloroplasts in a light-dependent manner to modulate photosynthesis. Prevents excessive induction of non-photochemical quenching (NPQ) under continuous-light conditions. Indirectly promotes efficient inorganic carbon uptake into chloroplasts. This chain is Potassium/proton antiporter CemA, found in Ceratophyllum demersum (Rigid hornwort).